Here is a 240-residue protein sequence, read N- to C-terminus: HTH-type transcriptional repressor STM4068 (240 aa).

The HTH gntR-type domain occupies 9 to 77 (TPLYKQLFFI…RGSGSVVCSV (69 aa)). The H-T-H motif DNA-binding region spans 37–56 (QKEIARSYNVSLIVVKQAWS).

Its function is as follows. Represses the expression of the STM4065-STM4067 operon. The polypeptide is HTH-type transcriptional repressor STM4068 (Salmonella typhimurium (strain LT2 / SGSC1412 / ATCC 700720)).